We begin with the raw amino-acid sequence, 215 residues long: Small ribosomal subunit protein uS3 (215 aa).

The KH type-2 domain maps to 38-106; that stretch reads LRAFLKKKLF…EVLIDIQEIR (69 aa).

Belongs to the universal ribosomal protein uS3 family. In terms of assembly, part of the 30S ribosomal subunit. Forms a tight complex with proteins S10 and S14.

In terms of biological role, binds the lower part of the 30S subunit head. Binds mRNA in the 70S ribosome, positioning it for translation. This is Small ribosomal subunit protein uS3 from Desulforapulum autotrophicum (strain ATCC 43914 / DSM 3382 / VKM B-1955 / HRM2) (Desulfobacterium autotrophicum).